The following is a 320-amino-acid chain: GTPase Era (320 aa).

The region spanning 25-193 (HCGFIAIVGR…RKHVRNHLPK (169 aa)) is the Era-type G domain. The tract at residues 33–40 (GRPNVGKS) is G1. 33-40 (GRPNVGKS) provides a ligand contact to GTP. The tract at residues 59-63 (QTTRH) is G2. The tract at residues 80–83 (DTPG) is G3. GTP-binding positions include 80–84 (DTPGL) and 142–145 (NKVD). Positions 142–145 (NKVD) are G4. The G5 stretch occupies residues 172-174 (ISA). Positions 216 to 302 (VREKLMRFTG…YLETWVKVKS (87 aa)) constitute a KH type-2 domain.

Belongs to the TRAFAC class TrmE-Era-EngA-EngB-Septin-like GTPase superfamily. Era GTPase family. Monomer.

It is found in the cytoplasm. It localises to the cell inner membrane. Functionally, an essential GTPase that binds both GDP and GTP, with rapid nucleotide exchange. Plays a role in 16S rRNA processing and 30S ribosomal subunit biogenesis and possibly also in cell cycle regulation and energy metabolism. The polypeptide is GTPase Era (Vibrio parahaemolyticus serotype O3:K6 (strain RIMD 2210633)).